The following is a 160-amino-acid chain: uncharacterized protein (160 aa).

An HTH marR-type domain is found at 20-152; that stretch reads EREIWVLYMK…VYEGLSILSR (133 aa). A DNA-binding region (H-T-H motif) is located at residues 66–89; sequence VSDIAEKMGASLSNTTGLLDRLEK.

This is an uncharacterized protein from Bacillus subtilis (strain 168).